Consider the following 301-residue polypeptide: Asialoglycoprotein receptor 2 (301 aa).

A disordered region spans residues 1-43; that stretch reads MEKDCQDIQQLDSEENDHQLSGDDEHGSHVQDPRIENPHWKGQ. Topologically, residues 1 to 58 are cytoplasmic; it reads MEKDCQDIQQLDSEENDHQLSGDDEHGSHVQDPRIENPHWKGQPLSRPFPQRLCSTFR. At serine 13 the chain carries Phosphoserine. A compositionally biased stretch (basic and acidic residues) spans 16–39; that stretch reads NDHQLSGDDEHGSHVQDPRIENPH. Cysteine 54 is lipidated: S-palmitoyl cysteine. The chain crosses the membrane as a helical; Signal-anchor for type II membrane protein span at residues 59-79; the sequence is LSLLALAFNILLLVVICVVSS. Over 80 to 301 the chain is Extracellular; sequence QSIQLQEEFR…VCEKRRNITH (222 aa). 2 N-linked (GlcNAc...) asparagine glycosylation sites follow: asparagine 97 and asparagine 165. The C-type lectin domain occupies 169–295; the sequence is CCPVNWVEFG…QQVNRWVCEK (127 aa). 3 disulfide bridges follow: cysteine 170-cysteine 181, cysteine 198-cysteine 293, and cysteine 271-cysteine 285. Asparagine 298 carries N-linked (GlcNAc...) asparagine glycosylation.

As to quaternary structure, interacts with LASS2. In terms of tissue distribution, expressed exclusively in hepatic parenchymal cells.

Its subcellular location is the membrane. In terms of biological role, mediates the endocytosis of plasma glycoproteins to which the terminal sialic acid residue on their complex carbohydrate moieties has been removed. The receptor recognizes terminal galactose and N-acetylgalactosamine units. After ligand binding to the receptor, the resulting complex is internalized and transported to a sorting organelle, where receptor and ligand are disassociated. The receptor then returns to the cell membrane surface. The polypeptide is Asialoglycoprotein receptor 2 (Asgr2) (Mus musculus (Mouse)).